The chain runs to 302 residues: Sulfate adenylyltransferase subunit 2 (302 aa).

A disordered region spans residues 280-302 (RQGRLIDSDQSASMEQKKRQGYF).

This sequence belongs to the PAPS reductase family. CysD subfamily. In terms of assembly, heterodimer composed of CysD, the smaller subunit, and CysN.

It carries out the reaction sulfate + ATP + H(+) = adenosine 5'-phosphosulfate + diphosphate. Its pathway is sulfur metabolism; hydrogen sulfide biosynthesis; sulfite from sulfate: step 1/3. With CysN forms the ATP sulfurylase (ATPS) that catalyzes the adenylation of sulfate producing adenosine 5'-phosphosulfate (APS) and diphosphate, the first enzymatic step in sulfur assimilation pathway. APS synthesis involves the formation of a high-energy phosphoric-sulfuric acid anhydride bond driven by GTP hydrolysis by CysN coupled to ATP hydrolysis by CysD. In Shewanella putrefaciens (strain CN-32 / ATCC BAA-453), this protein is Sulfate adenylyltransferase subunit 2.